The primary structure comprises 154 residues: Myoglobin (154 aa).

One can recognise a Globin domain in the interval 2–148 (GLSDGEWQLV…FRNDMAAKYK (147 aa)). At Ser4 the chain carries Phosphoserine. A nitrite-binding site is contributed by His65. Position 65 (His65) interacts with O2. Thr68 is subject to Phosphothreonine. His94 serves as a coordination point for heme b.

It belongs to the globin family. As to quaternary structure, monomeric.

The protein localises to the cytoplasm. It localises to the sarcoplasm. It catalyses the reaction Fe(III)-heme b-[protein] + nitric oxide + H2O = Fe(II)-heme b-[protein] + nitrite + 2 H(+). The enzyme catalyses H2O2 + AH2 = A + 2 H2O. Monomeric heme protein which primary function is to store oxygen and facilitate its diffusion within muscle tissues. Reversibly binds oxygen through a pentacoordinated heme iron and enables its timely and efficient release as needed during periods of heightened demand. Depending on the oxidative conditions of tissues and cells, and in addition to its ability to bind oxygen, it also has a nitrite reductase activity whereby it regulates the production of bioactive nitric oxide. Under stress conditions, like hypoxia and anoxia, it also protects cells against reactive oxygen species thanks to its pseudoperoxidase activity. This chain is Myoglobin (MB), found in Erythrocebus patas (Red guenon).